The sequence spans 136 residues: Ciliary microtubule inner protein 1 (136 aa).

The protein localises to the cell projection. It is found in the cilium. This Mus musculus (Mouse) protein is Ciliary microtubule inner protein 1 (Cimip1).